The following is a 71-amino-acid chain: Small ribosomal subunit protein bS21 (71 aa).

The segment at 47 to 71 (RENATRAKRHAKRVARENARNTRLY) is disordered. Residues 60-71 (VARENARNTRLY) are compositionally biased toward basic and acidic residues.

This sequence belongs to the bacterial ribosomal protein bS21 family.

This Actinobacillus succinogenes (strain ATCC 55618 / DSM 22257 / CCUG 43843 / 130Z) protein is Small ribosomal subunit protein bS21.